The following is a 517-amino-acid chain: Methylmalonyl-CoA decarboxylase subunit alpha (517 aa).

The CoA carboxyltransferase N-terminal domain maps to 4-260 (AAKKIQDLQK…NNMEKAPEFG (257 aa)). One can recognise a CoA carboxyltransferase C-terminal domain in the interval 271 to 513 (ELDALMPDNP…REKLPAKKHG (243 aa)).

This sequence belongs to the AccD/PCCB family. As to quaternary structure, the methylmalonyl-CoA decarboxylase is composed of four subunits: the carboxyltransferase alpha subunit (MmdA), the tunnel beta subunit (MmdB), the biotin-containing gamma subunit (MmdC) and the delta subunit (MmdD).

It localises to the cell membrane. It catalyses the reaction (S)-methylmalonyl-CoA + Na(+)(in) + H(+)(out) = propanoyl-CoA + Na(+)(out) + CO2. Its function is as follows. Carboxyltransferase subunit of the sodium ion pump methylmalonyl-CoA decarboxylase, which converts the chemical energy of a decarboxylation reaction into an electrochemical gradient of Na(+) ions across the cytoplasmic membrane, thereby creating a sodium ion motive force that is used for ATP synthesis. The alpha subunit catalyzes the Na(+)-independent carboxyltransfer from methylmalonyl-CoA to the prosthetic biotin group located on the gamma subunit. The protein is Methylmalonyl-CoA decarboxylase subunit alpha of Propionigenium modestum.